Consider the following 270-residue polypeptide: Undecaprenyl-diphosphatase 1 (270 aa).

Helical transmembrane passes span 41 to 61 (IEGF…VLLV), 88 to 108 (FRFI…GVLF), 117 to 137 (KDGV…LFLI), 192 to 212 (FSFL…ITDI), 218 to 238 (LGEL…ATYF), and 250 to 270 (GNLV…LIFA).

Belongs to the UppP family.

The protein resides in the cell membrane. It catalyses the reaction di-trans,octa-cis-undecaprenyl diphosphate + H2O = di-trans,octa-cis-undecaprenyl phosphate + phosphate + H(+). In terms of biological role, catalyzes the dephosphorylation of undecaprenyl diphosphate (UPP). Confers resistance to bacitracin. This chain is Undecaprenyl-diphosphatase 1, found in Bacillus licheniformis (strain ATCC 14580 / DSM 13 / JCM 2505 / CCUG 7422 / NBRC 12200 / NCIMB 9375 / NCTC 10341 / NRRL NRS-1264 / Gibson 46).